A 371-amino-acid chain; its full sequence is Aminomethyltransferase (371 aa).

The protein belongs to the GcvT family. As to quaternary structure, the glycine cleavage system is composed of four proteins: P, T, L and H.

The catalysed reaction is N(6)-[(R)-S(8)-aminomethyldihydrolipoyl]-L-lysyl-[protein] + (6S)-5,6,7,8-tetrahydrofolate = N(6)-[(R)-dihydrolipoyl]-L-lysyl-[protein] + (6R)-5,10-methylene-5,6,7,8-tetrahydrofolate + NH4(+). Functionally, the glycine cleavage system catalyzes the degradation of glycine. The chain is Aminomethyltransferase from Pectobacterium atrosepticum (strain SCRI 1043 / ATCC BAA-672) (Erwinia carotovora subsp. atroseptica).